Consider the following 241-residue polypeptide: Uridylate kinase (241 aa).

ATP-binding positions include 15-18, Gly-58, and Arg-62; that span reads KLSG. UMP contacts are provided by residues Asp-77 and 138-145; that span reads TGNPYFTT. ATP contacts are provided by Thr-165, Tyr-171, and Asp-174.

This sequence belongs to the UMP kinase family. Homohexamer.

The protein localises to the cytoplasm. It carries out the reaction UMP + ATP = UDP + ADP. Its pathway is pyrimidine metabolism; CTP biosynthesis via de novo pathway; UDP from UMP (UMPK route): step 1/1. Its activity is regulated as follows. Inhibited by UTP. Catalyzes the reversible phosphorylation of UMP to UDP. The protein is Uridylate kinase of Desulfotalea psychrophila (strain LSv54 / DSM 12343).